Here is a 498-residue protein sequence, read N- to C-terminus: Lysine--tRNA ligase (498 aa).

Glutamate 407 and glutamate 414 together coordinate Mg(2+).

This sequence belongs to the class-II aminoacyl-tRNA synthetase family. Homodimer. Mg(2+) is required as a cofactor.

It is found in the cytoplasm. The catalysed reaction is tRNA(Lys) + L-lysine + ATP = L-lysyl-tRNA(Lys) + AMP + diphosphate. In Rhizobium meliloti (strain 1021) (Ensifer meliloti), this protein is Lysine--tRNA ligase (lysS).